The following is a 508-amino-acid chain: Aromatic-L-amino-acid decarboxylase (508 aa).

Substrate is bound at residue Thr82. Residues Ala148 and Ser149 each contribute to the pyridoxal 5'-phosphate site. Position 192 (His192) interacts with substrate. Pyridoxal 5'-phosphate contacts are provided by Thr246 and Asn300. Lys303 bears the N6-(pyridoxal phosphate)lysine mark.

It belongs to the group II decarboxylase family. In terms of assembly, homodimer. Requires pyridoxal 5'-phosphate as cofactor.

The catalysed reaction is L-dopa + H(+) = dopamine + CO2. The enzyme catalyses 5-hydroxy-L-tryptophan + H(+) = serotonin + CO2. Its function is as follows. Catalyzes the decarboxylation of L-3,4-dihydroxyphenylalanine (DOPA) to dopamine, L-5-hydroxytryptophan to serotonin and L-tryptophan to tryptamine. In Manduca sexta (Tobacco hawkmoth), this protein is Aromatic-L-amino-acid decarboxylase (Ddc).